The following is a 196-amino-acid chain: dITP/XTP pyrophosphatase (196 aa).

A substrate-binding site is contributed by 10–15 (SGNKGK). The Mg(2+) site is built by Glu40 and Asp69. The Proton acceptor role is filled by Asp69. Substrate-binding positions include Ser70, 147–150 (FGYD), Lys170, and 175–176 (HR).

This sequence belongs to the HAM1 NTPase family. Homodimer. Mg(2+) is required as a cofactor.

The catalysed reaction is XTP + H2O = XMP + diphosphate + H(+). It catalyses the reaction dITP + H2O = dIMP + diphosphate + H(+). It carries out the reaction ITP + H2O = IMP + diphosphate + H(+). In terms of biological role, pyrophosphatase that catalyzes the hydrolysis of nucleoside triphosphates to their monophosphate derivatives, with a high preference for the non-canonical purine nucleotides XTP (xanthosine triphosphate), dITP (deoxyinosine triphosphate) and ITP. Seems to function as a house-cleaning enzyme that removes non-canonical purine nucleotides from the nucleotide pool, thus preventing their incorporation into DNA/RNA and avoiding chromosomal lesions. The protein is dITP/XTP pyrophosphatase of Prochlorococcus marinus (strain NATL1A).